The sequence spans 363 residues: Translocating chain-associated membrane protein 1-like 1 (363 aa).

The Cytoplasmic segment spans residues 1–29; that stretch reads MGLRKKNARNPPVLSHEFMVQNHADMVSC. A helical membrane pass occupies residues 30–50; the sequence is VGMFFVLGLMFEGTSEMSIAF. Topologically, residues 51 to 80 are lumenal; it reads LTLQHGVVVPAEGLPSGSRTLYHYGVKDLA. Residues 81–101 form a helical membrane-spanning segment; that stretch reads TVFFYMLVAIIIHATIQEYVL. Residues 102 to 120 are Cytoplasmic-facing; the sequence is DKLSRRLQLTKGKQNKLNE. Positions 116–324 constitute a TLC domain; sequence NKLNEAGQLS…TVWLQRWLED (209 aa). Residues 121–141 traverse the membrane as a helical segment; the sequence is AGQLSVFYIVSGIWGMIILAS. The Lumenal segment spans residues 142–159; sequence ENCLSDPTLLWKSQPHNM. Residues 160-179 traverse the membrane as a helical segment; the sequence is MTFQMKFFYISQLAYWFHSF. Residues 180–191 lie on the Cytoplasmic side of the membrane; it reads PELYFQKVRKQD. The helical transmembrane segment at 192-214 threads the bilayer; it reads IPGQLIYIGLHLFHIGGAYLLYL. Residues 215-218 lie on the Lumenal side of the membrane; sequence NHLG. A helical membrane pass occupies residues 219–241; the sequence is LLLLMLHYAVELLSSVCSLLYFG. The Cytoplasmic portion of the chain corresponds to 242–250; the sequence is DERYQKGLS. Residues 251 to 271 traverse the membrane as a helical segment; the sequence is LWPIVFISGRLVTLIVSVVTV. Over 272–295 the chain is Lumenal; sequence GLHLAGTNRNGNALSGNVNVLAAK. A helical transmembrane segment spans residues 296 to 316; it reads IAVLSSSCSIQVYITWTLTTV. Residues 317–363 lie on the Cytoplasmic side of the membrane; sequence WLQRWLEDANLHVCGRKRRSRARKGTENGVENPNRIDSPPKKKEKAP. The tract at residues 338 to 363 is disordered; sequence ARKGTENGVENPNRIDSPPKKKEKAP. Basic and acidic residues predominate over residues 354–363; sequence SPPKKKEKAP.

It belongs to the TRAM family.

It localises to the endoplasmic reticulum membrane. Stimulatory or required for the translocation of secretory proteins across the ER membrane. This is Translocating chain-associated membrane protein 1-like 1 (Tram1l1) from Mus musculus (Mouse).